Reading from the N-terminus, the 306-residue chain is Low density lipoprotein receptor adapter protein 1 (306 aa).

An N-acetylmethionine modification is found at methionine 1. Serine 14 carries the phosphoserine modification. Residues 44-168 (GMVFSLKYLG…VAQAFKVAFE (125 aa)) form the PID domain. Residues 178–204 (EKREKANQEGGDVPGTRRDSTPSLKTS) are disordered. Phosphoserine is present on residues serine 197 and serine 200. Residues 210 to 214 (LLDLE) carry the Clathrin box motif. The AP-2 complex binding stretch occupies residues 247-274 (WELDDGLDEAFSRLAQSRTNPQVLDTGL). The [DE]-X(1,2)-F-X-X-[FL]-X-X-X-R motif motif lies at 255 to 264 (EAFSRLAQSR).

Interacts (via PID domain) with LDLR (via NPXY motifs). Binds to soluble clathrin trimers. Interacts with AP2B1; the interaction mediates the association with the AP-2 complex. Interacts with VLDLR. Interacts with LRP2.

The protein localises to the cytoplasm. In terms of biological role, adapter protein (clathrin-associated sorting protein (CLASP)) required for efficient endocytosis of the LDL receptor (LDLR) in polarized cells such as hepatocytes and lymphocytes, but not in non-polarized cells (fibroblasts). May be required for LDL binding and internalization but not for receptor clustering in coated pits. May facilitate the endocytosis of LDLR and LDLR-LDL complexes from coated pits by stabilizing the interaction between the receptor and the structural components of the pits. May also be involved in the internalization of other LDLR family members. Binds to phosphoinositides, which regulate clathrin bud assembly at the cell surface. Required for trafficking of LRP2 to the endocytic recycling compartment which is necessary for LRP2 proteolysis, releasing a tail fragment which translocates to the nucleus and mediates transcriptional repression. This is Low density lipoprotein receptor adapter protein 1 from Rattus norvegicus (Rat).